The following is a 149-amino-acid chain: Flagellar basal-body protein FlbY (149 aa).

As to quaternary structure, the basal body constitutes a major portion of the flagellar organelle and consists of five rings (E,L,P,S, and M) mounted on a central rod.

It localises to the bacterial flagellum basal body. This chain is Flagellar basal-body protein FlbY (flbY), found in Caulobacter vibrioides (strain ATCC 19089 / CIP 103742 / CB 15) (Caulobacter crescentus).